Consider the following 402-residue polypeptide: uncharacterized protein (402 aa).

The interval 332-402 (MFSSSSSSSE…PEPPPGKPGR (71 aa)) is disordered. The segment covering 370 to 379 (SETTSLQQYS) has biased composition (polar residues). The segment covering 393–402 (PEPPPGKPGR) has biased composition (pro residues).

This is an uncharacterized protein from Mus musculus (Mouse).